The chain runs to 179 residues: MARFQEFYKEKVVPGLIEKFGYKSVMEVPRITKITLNMGLGEAIADKKVIENAVGDLTKIAGQKPVVTKARKAIAGFKIRQGYPIGAMVTLRGRAMYEFLDRFVTVALPRVRDFRGVSGRAFDGRGNYNIGVKEQIIFPEIDYDKIDALRGLNISITTTAKTDDEAKALLASFKFPFRN.

Belongs to the universal ribosomal protein uL5 family. In terms of assembly, part of the 50S ribosomal subunit; part of the 5S rRNA/L5/L18/L25 subcomplex. Contacts the 5S rRNA and the P site tRNA. Forms a bridge to the 30S subunit in the 70S ribosome.

In terms of biological role, this is one of the proteins that bind and probably mediate the attachment of the 5S RNA into the large ribosomal subunit, where it forms part of the central protuberance. In the 70S ribosome it contacts protein S13 of the 30S subunit (bridge B1b), connecting the 2 subunits; this bridge is implicated in subunit movement. Contacts the P site tRNA; the 5S rRNA and some of its associated proteins might help stabilize positioning of ribosome-bound tRNAs. This chain is Large ribosomal subunit protein uL5, found in Burkholderia vietnamiensis (strain G4 / LMG 22486) (Burkholderia cepacia (strain R1808)).